We begin with the raw amino-acid sequence, 338 residues long: Fructose-1,6-bisphosphatase class 1 (338 aa).

Mg(2+) contacts are provided by E90, D112, L114, and D115. Residues 115–118 (DGSS), N207, and K273 each bind substrate. Position 279 (E279) interacts with Mg(2+).

It belongs to the FBPase class 1 family. Homotetramer. Mg(2+) is required as a cofactor.

The protein localises to the cytoplasm. It catalyses the reaction beta-D-fructose 1,6-bisphosphate + H2O = beta-D-fructose 6-phosphate + phosphate. The protein operates within carbohydrate biosynthesis; gluconeogenesis. The chain is Fructose-1,6-bisphosphatase class 1 from Xanthomonas campestris pv. campestris (strain 8004).